A 620-amino-acid polypeptide reads, in one-letter code: MSEHVEPAAPGPGPNGGGGGPAPARGPRTPNLNPNPLINVRDRLFHALFFKMAVTYSRLFPPAFRRLFEFFVLLKALFVLFVLAYIHIVFSRSPINCLEHVRDKWPREGILRVEVRHNSSRAPVFLQFCDSGGRGSFPGLAVEPGSNLDMEDEEEEELTMEMFGNSSIKFELDIEPKVFKPPSSTEALNDSQEFPFPETPTKVWPQDEYIVEYSLEYGFLRLSQATRQRLSIPVMVVTLDPTRDQCFGDRFSRLLLDEFLGYDDILMSSVKGLAENEENKGFLRNVVSGEHYRFVSMWMARTSYLAAFAIMVIFTLSVSMLLRYSHHQIFVFIVDLLQMLEMNMAIAFPAAPLLTVILALVGMEAIMSEFFNDTTTAFYIILIVWLADQYDAICCHTSTSKRHWLRFFYLYHFAFYAYHYRFNGQYSSLALVTSWLFIQHSMIYFFHHYELPAILQQVRIQEMLLQAPPLGPGTPTALPDDMNNNSGAPATAPDSAGQPPALGPVSPGASGSPGPVAAAPSSLVAAAASVAAAAGGDLGWMAETAAIITDASFLSGLSASLLERRPASPLGPAGGLPHAPQDSVPPSDSAASDTTPLGAAVGGPSPASMAPTEAPSEVGS.

The interval Met-1–Asn-33 is disordered. At Ser-2 the chain carries N-acetylserine. A compositionally biased stretch (low complexity) spans Ala-22–Asn-31. Residue Thr-29 is modified to Phosphothreonine. Residues Phe-70–Phe-90 traverse the membrane as a helical segment. Residue Asn-189 is glycosylated (N-linked (GlcNAc...) asparagine). A run of 3 helical transmembrane segments spans residues Thr-302–Leu-322, Ile-346–Ile-366, and Tyr-426–Phe-446. Disordered regions lie at residues Thr-474–Ala-517 and Ser-568–Ser-620. 2 stretches are compositionally biased toward low complexity: residues Pro-499–Ala-517 and Ser-568–Asp-593.

The protein belongs to the membralin family. As to quaternary structure, interacts with ERLIN2.

The protein localises to the endoplasmic reticulum membrane. Functionally, may have a role in the ERAD pathway required for clearance of misfolded proteins in the endoplasmic reticulum (ER). Promotes survival of motor neurons, probably by protecting against ER stress. The protein is Membralin (TMEM259) of Homo sapiens (Human).